Consider the following 388-residue polypeptide: Pepsin A (388 aa).

A signal peptide spans 1–15; the sequence is MKWLLLLGLVALSEC. A propeptide spans 16-62 (activation peptide); sequence IIYKVPLVRKKSLRRNLSEHGLLKDFLKKHNRNPASKYFPQTEAPTL. The region spanning 76–385 is the Peptidase A1 domain; sequence YFGTIGIGTP…DRANNQVGLA (310 aa). D94 is an active-site residue. C107 and C112 are joined by a disulfide. S130 carries the post-translational modification Phosphoserine. A disulfide bond links C268 and C272. D277 is a catalytic residue. C311 and C344 form a disulfide bridge.

Belongs to the peptidase A1 family.

It localises to the secreted. The catalysed reaction is Preferential cleavage: hydrophobic, preferably aromatic, residues in P1 and P1' positions. Cleaves 1-Phe-|-Val-2, 4-Gln-|-His-5, 13-Glu-|-Ala-14, 14-Ala-|-Leu-15, 15-Leu-|-Tyr-16, 16-Tyr-|-Leu-17, 23-Gly-|-Phe-24, 24-Phe-|-Phe-25 and 25-Phe-|-Tyr-26 bonds in the B chain of insulin.. In terms of biological role, shows particularly broad specificity; although bonds involving phenylalanine and leucine are preferred, many others are also cleaved to some extent. In Macaca mulatta (Rhesus macaque), this protein is Pepsin A (PGA).